A 404-amino-acid polypeptide reads, in one-letter code: Chorismate synthase (404 aa).

Residue Arg47 participates in NADP(+) binding. FMN is bound by residues 156–158 (RSS), 281–282 (NA), Gly321, 336–340 (KPTST), and Arg363.

Belongs to the chorismate synthase family. In terms of assembly, homotetramer. FMNH2 serves as cofactor.

The catalysed reaction is 5-O-(1-carboxyvinyl)-3-phosphoshikimate = chorismate + phosphate. Its pathway is metabolic intermediate biosynthesis; chorismate biosynthesis; chorismate from D-erythrose 4-phosphate and phosphoenolpyruvate: step 7/7. In terms of biological role, catalyzes the anti-1,4-elimination of the C-3 phosphate and the C-6 proR hydrogen from 5-enolpyruvylshikimate-3-phosphate (EPSP) to yield chorismate, which is the branch point compound that serves as the starting substrate for the three terminal pathways of aromatic amino acid biosynthesis. This reaction introduces a second double bond into the aromatic ring system. This Rhodopirellula baltica (strain DSM 10527 / NCIMB 13988 / SH1) protein is Chorismate synthase.